The following is a 112-amino-acid chain: Large ribosomal subunit protein eL30y (112 aa).

The protein belongs to the eukaryotic ribosomal protein eL30 family.

This Arabidopsis thaliana (Mouse-ear cress) protein is Large ribosomal subunit protein eL30y (RPL30B).